A 466-amino-acid polypeptide reads, in one-letter code: Asparagine--tRNA ligase (466 aa).

The protein belongs to the class-II aminoacyl-tRNA synthetase family. As to quaternary structure, homodimer.

It is found in the cytoplasm. The enzyme catalyses tRNA(Asn) + L-asparagine + ATP = L-asparaginyl-tRNA(Asn) + AMP + diphosphate + H(+). This Shewanella sp. (strain MR-7) protein is Asparagine--tRNA ligase.